Here is a 116-residue protein sequence, read N- to C-terminus: Mercuric transport protein MerT (116 aa).

2 helical membrane passes run 16-36 and 46-66; these read LAAILASACCLGPLVLIALGF and VLEPYRPIFIGAALVALFFAW. Cysteine 24 and cysteine 25 together coordinate Hg(2+). 2 residues coordinate Hg(2+): cysteine 76 and cysteine 82. Residues 94-114 form a helical membrane-spanning segment; the sequence is IFWFVAVLVLVALGFPYVMPF.

It belongs to the MerT family.

It is found in the cell inner membrane. Functionally, involved in mercury resistance. Probably transfers a mercuric ion from the periplasmic Hg(2+)-binding protein MerP to the cytoplasmic mercuric reductase MerA. This Acinetobacter calcoaceticus protein is Mercuric transport protein MerT.